A 163-amino-acid polypeptide reads, in one-letter code: uncharacterized protein (163 aa).

The helical transmembrane segment at 11–31 (LSWFLLLVVVILIFFLLLSCL) threads the bilayer.

It localises to the membrane. This is an uncharacterized protein from Saccharomyces cerevisiae (strain ATCC 204508 / S288c) (Baker's yeast).